The chain runs to 106 residues: Large ribosomal subunit protein uL24 (106 aa).

This sequence belongs to the universal ribosomal protein uL24 family. As to quaternary structure, part of the 50S ribosomal subunit.

In terms of biological role, one of two assembly initiator proteins, it binds directly to the 5'-end of the 23S rRNA, where it nucleates assembly of the 50S subunit. One of the proteins that surrounds the polypeptide exit tunnel on the outside of the subunit. In Acidovorax sp. (strain JS42), this protein is Large ribosomal subunit protein uL24.